Consider the following 421-residue polypeptide: uncharacterized protein (421 aa).

2 coiled-coil regions span residues 126–182 (YART…IQKI) and 328–397 (YQVE…RLTL).

This is an uncharacterized protein from Treponema pallidum (strain Nichols).